The sequence spans 422 residues: Histidine--tRNA ligase (422 aa).

This sequence belongs to the class-II aminoacyl-tRNA synthetase family. As to quaternary structure, homodimer.

It is found in the cytoplasm. It carries out the reaction tRNA(His) + L-histidine + ATP = L-histidyl-tRNA(His) + AMP + diphosphate + H(+). The protein is Histidine--tRNA ligase (hisS) of Photobacterium profundum (strain SS9).